Consider the following 301-residue polypeptide: Negative regulator of the PHO system (301 aa).

The 291-residue stretch at 7 to 297 (FKQLERLGNG…AQQALSHPLF (291 aa)) folds into the Protein kinase domain. Residues 13–21 (LGNGTYATV) and K36 contribute to the ATP site. The active-site Proton acceptor is the D133.

The protein belongs to the protein kinase superfamily. CMGC Ser/Thr protein kinase family. CDC2/CDKX subfamily. In terms of assembly, interacts with a number of cyclins.

The enzyme catalyses L-seryl-[protein] + ATP = O-phospho-L-seryl-[protein] + ADP + H(+). The catalysed reaction is L-threonyl-[protein] + ATP = O-phospho-L-threonyl-[protein] + ADP + H(+). Its function is as follows. When phosphate concentrations are high it phosphorylates the PHO4 transcription factor thus establishing repression. In Eremothecium gossypii (strain ATCC 10895 / CBS 109.51 / FGSC 9923 / NRRL Y-1056) (Yeast), this protein is Negative regulator of the PHO system (PHO85).